A 624-amino-acid chain; its full sequence is Chaperone protein HtpG (624 aa).

Residues 1–336 (MNMKGQETRG…SNDLPLNVSR (336 aa)) form an a; substrate-binding region. Residues 337-552 (EILQDSRITQ…ADEMSTQMAK (216 aa)) are b. Residues 553 to 624 (LFAAAGQQAP…IRRMNQLLTA (72 aa)) form a c region.

The protein belongs to the heat shock protein 90 family. In terms of assembly, homodimer.

The protein localises to the cytoplasm. In terms of biological role, molecular chaperone. Has ATPase activity. The sequence is that of Chaperone protein HtpG from Yersinia pestis bv. Antiqua (strain Antiqua).